A 48-amino-acid polypeptide reads, in one-letter code: Cuticle protein 6 isoform b (48 aa).

The polypeptide is Cuticle protein 6 isoform b (Limulus polyphemus (Atlantic horseshoe crab)).